A 358-amino-acid polypeptide reads, in one-letter code: Mitogen-activated protein kinase 1 (358 aa).

Ala2 carries the post-translational modification N-acetylalanine. Residues 23 to 311 enclose the Protein kinase domain; the sequence is YTNLSYIGEG…VEQALAHPYL (289 aa). Position 27 is a phosphoserine; by SGK1 (Ser27). ATP is bound by residues 29–37 and Lys52; that span reads IGEGAYGMV. The active-site Proton acceptor is the Asp147. Thr183 bears the Phosphothreonine; by MAP2K1 and MAP2K2 mark. The short motif at 183–185 is the TXY element; that stretch reads TEY. Tyr185 bears the Phosphotyrosine; by MAP2K1 and MAP2K2 mark. Thr188 is subject to Phosphothreonine; by autocatalysis. Residues Ser244, Ser246, and Ser282 each carry the phosphoserine modification.

This sequence belongs to the protein kinase superfamily. CMGC Ser/Thr protein kinase family. MAP kinase subfamily. Binds both upstream activators and downstream substrates in multimolecular complexes. This interaction inhibits its tyrosine-kinase activity. Interacts with ADAM15, ARHGEF2, ARRB2, DAPK1 (via death domain), HSF4, IER3, IPO7, NISCH, SGK1, and isoform 1 of NEK2. Interacts (via phosphorylated form) with TPR (via C-terminal region and phosphorylated form); the interaction requires dimerization of MAPK1/ERK2 and increases following EGF stimulation. Interacts with MAP2K1. Interacts with DUSP6. Interacts (phosphorylated form) with CAV2 ('Tyr-19'-phosphorylated form); the interaction, promoted by insulin, leads to nuclear location and MAPK1 activation. Interacts with DCC. Interacts with MORG1. Interacts with PEA15. Interacts with MKNK2. MKNK2 isoform 1 binding prevents from dephosphorylation and inactivation. The phosphorylated form interacts with PML. Interacts with STYX. Interacts with CDK2AP2. Interacts with CAVIN4. Interacts with DUSP7; the interaction enhances DUSP7 phosphatase activity. Interacts with GIT1; this interaction is necessary for MAPK1 localization to focal adhesions. Interacts with ZNF263. Interacts with phosphoglycerate kinase PGK1; the interaction is direct, occurs under hypoxic conditions, and promotes interaction between PGK1 and PIN1. The cofactor is Mg(2+). Post-translationally, dually phosphorylated on Thr-183 and Tyr-185, which activates the enzyme. Ligand-activated ALK induces tyrosine phosphorylation. Dephosphorylated by PTPRJ at Tyr-185. Phosphorylated upon FLT3 and KIT signaling. Dephosphorylated by DUSP1 and DUSP2 at Thr-183 and Tyr-185. ISGylated. In terms of processing, ubiquitinated by TRIM15 via 'Lys-63'-linked ubiquitination; leading to activation. Deubiquitinated by CYLD. Widely expressed.

It localises to the cytoplasm. It is found in the cytoskeleton. Its subcellular location is the spindle. The protein localises to the nucleus. The protein resides in the microtubule organizing center. It localises to the centrosome. It is found in the membrane. Its subcellular location is the caveola. The protein localises to the cell junction. The protein resides in the focal adhesion. It carries out the reaction L-seryl-[protein] + ATP = O-phospho-L-seryl-[protein] + ADP + H(+). The enzyme catalyses L-threonyl-[protein] + ATP = O-phospho-L-threonyl-[protein] + ADP + H(+). With respect to regulation, phosphorylated by MAP2K1/MEK1 and MAP2K2/MEK2 on Thr-183 and Tyr-185 in response to external stimuli like insulin or NGF. Both phosphorylations are required for activity. This phosphorylation causes dramatic conformational changes, which enable full activation and interaction of MAPK1/ERK2 with its substrates. Phosphorylation on Ser-27 by SGK1 results in its activation by enhancing its interaction with MAP2K1/MEK1 and MAP2K2/MEK2. Dephosphorylated and inactivated by DUSP1, DUSP3, DUSP6 and DUSP9. Inactivated by pyrimidylpyrrole inhibitors. Serine/threonine kinase which acts as an essential component of the MAP kinase signal transduction pathway. MAPK1/ERK2 and MAPK3/ERK1 are the 2 MAPKs which play an important role in the MAPK/ERK cascade. They participate also in a signaling cascade initiated by activated KIT and KITLG/SCF. Depending on the cellular context, the MAPK/ERK cascade mediates diverse biological functions such as cell growth, adhesion, survival and differentiation through the regulation of transcription, translation, cytoskeletal rearrangements. The MAPK/ERK cascade also plays a role in initiation and regulation of meiosis, mitosis, and postmitotic functions in differentiated cells by phosphorylating a number of transcription factors. About 160 substrates have already been discovered for ERKs. Many of these substrates are localized in the nucleus, and seem to participate in the regulation of transcription upon stimulation. However, other substrates are found in the cytosol as well as in other cellular organelles, and those are responsible for processes such as translation, mitosis and apoptosis. Moreover, the MAPK/ERK cascade is also involved in the regulation of the endosomal dynamics, including lysosome processing and endosome cycling through the perinuclear recycling compartment (PNRC); as well as in the fragmentation of the Golgi apparatus during mitosis. The substrates include transcription factors (such as ATF2, BCL6, ELK1, ERF, FOS, HSF4 or SPZ1), cytoskeletal elements (such as CANX, CTTN, GJA1, MAP2, MAPT, PXN, SORBS3 or STMN1), regulators of apoptosis (such as BAD, BTG2, CASP9, DAPK1, IER3, MCL1 or PPARG), regulators of translation (such as EIF4EBP1 and FXR1) and a variety of other signaling-related molecules (like ARHGEF2, DCC, FRS2 or GRB10). Protein kinases (such as RAF1, RPS6KA1/RSK1, RPS6KA3/RSK2, RPS6KA2/RSK3, RPS6KA6/RSK4, SYK, MKNK1/MNK1, MKNK2/MNK2, RPS6KA5/MSK1, RPS6KA4/MSK2, MAPKAPK3 or MAPKAPK5) and phosphatases (such as DUSP1, DUSP4, DUSP6 or DUSP16) are other substrates which enable the propagation the MAPK/ERK signal to additional cytosolic and nuclear targets, thereby extending the specificity of the cascade. Mediates phosphorylation of TPR in response to EGF stimulation. May play a role in the spindle assembly checkpoint. Phosphorylates PML and promotes its interaction with PIN1, leading to PML degradation. Phosphorylates CDK2AP2. Phosphorylates phosphoglycerate kinase PGK1 under hypoxic conditions to promote its targeting to the mitochondrion and suppress the formation of acetyl-coenzyme A from pyruvate. Functionally, acts as a transcriptional repressor. Binds to a [GC]AAA[GC] consensus sequence. Repress the expression of interferon gamma-induced genes. Seems to bind to the promoter of CCL5, DMP1, IFIH1, IFITM1, IRF7, IRF9, LAMP3, OAS1, OAS2, OAS3 and STAT1. Transcriptional activity is independent of kinase activity. This is Mitogen-activated protein kinase 1 from Mus musculus (Mouse).